A 346-amino-acid polypeptide reads, in one-letter code: Very-long-chain 3-oxoacyl-CoA reductase (346 aa).

The helical transmembrane segment at Ser26–Val46 threads the bilayer. Val71, Asp126, Asp134, Asn153, Tyr220, Lys224, Ile253, and Ser255 together coordinate NADP(+). Tyr220 acts as the Proton donor in catalysis. The active-site Lowers pKa of active site Tyr is Lys224.

The protein belongs to the short-chain dehydrogenases/reductases (SDR) family.

The protein localises to the endoplasmic reticulum membrane. It catalyses the reaction a very-long-chain (3R)-3-hydroxyacyl-CoA + NADP(+) = a very-long-chain 3-oxoacyl-CoA + NADPH + H(+). It participates in lipid metabolism; fatty acid biosynthesis. Its function is as follows. Component of the microsomal membrane bound fatty acid elongation system, which produces the 26-carbon very long-chain fatty acids (VLCFA) from palmitate. Catalyzes the reduction of the 3-ketoacyl-CoA intermediate that is formed in each cycle of fatty acid elongation. VLCFAs serve as precursors for ceramide and sphingolipids. The polypeptide is Very-long-chain 3-oxoacyl-CoA reductase (Aspergillus oryzae (strain ATCC 42149 / RIB 40) (Yellow koji mold)).